Consider the following 85-residue polypeptide: MNTVTDQPHSISVNQLRAFIERIERLEEEKKTISDDIKEVYAELKGSGFDSKAVRSIIRLRKKEDHERMEEEAIIQLYKNALGMS.

The protein belongs to the UPF0335 family.

The chain is UPF0335 protein BQ12070 from Bartonella quintana (strain Toulouse) (Rochalimaea quintana).